The chain runs to 618 residues: MALPIDPMEEPRMYQQTLLQDGLYDLLESDMMVDCVLKIKDKEFPCHRLVLAACSSYFRAFFKSGVEESKQREIVLEDVEPGVMGIILKYLYTSNINVTEQNVQDIFALSNMLQIPSIFTVCVSFLQKRLSLSNCLAIFRLGLMLDCPRLAISARNFACERFQFITRDEEFLQLTPSELAAVLASDSLNVETEQDVFEALIKWVGHDQENRIGDLPDLLDCIRLRLVPRDYFVKNVEKHEWLSSNPEITKKLQLVKDAHAGKLPELKKTKNKKSPSEEGQKKGDEEEVEEEEEQEERLPGILNDNLRFGMFLRELIFLINDSASVAYDPTGNDCYVASVSTQIPKNHCSLVTKENQIFVAGGLFFDEQSKDEQIYSYFLQFDPASSDWMGMPPIPSPRFLFGMGEAENFIFVIGGREMKEGENILNTVMVYDRQFLKWAESDPLPYLVYGHGVVSHNEMIYVIGGKGENKECLNRVCAYDIKTHQWKDLAPLNTARSLFGVTIHKNNIYVVAGVTDSGLTGSAEVYDIKTNKWSEFVEFPQDRSSLSLVSVSGVLYAVGGFAMFPKEDSDDLMPLEMNDIWRYDESERTWSGILRENRYASGATVLGVRLNTLRLTKM.

The region spanning 33-100 (VDCVLKIKDK…LYTSNINVTE (68 aa)) is the BTB domain. The 103-residue stretch at 135–237 (CLAIFRLGLM…PRDYFVKNVE (103 aa)) folds into the BACK domain. A compositionally biased stretch (basic and acidic residues) spans 264 to 284 (PELKKTKNKKSPSEEGQKKGD). The segment at 264–297 (PELKKTKNKKSPSEEGQKKGDEEEVEEEEEQEER) is disordered. Positions 285–295 (EEEVEEEEEQE) are enriched in acidic residues. Kelch repeat units lie at residues 356 to 408 (QIFV…EAEN), 409 to 458 (FIFV…SHNE), 459 to 506 (MIYV…IHKN), 508 to 553 (IYVV…SVSG), and 555 to 608 (LYAV…VLGV).

This sequence belongs to the KLHL40 family. As to quaternary structure, component of the BCR(KLHL40) E3 ubiquitin ligase complex. As to expression, expressed in skeletal muscle. Detected in the eye at much lower levels.

The protein localises to the cytoplasm. It is found in the myofibril. The protein resides in the sarcomere. Its subcellular location is the a band. It localises to the i band. Functionally, substrate-specific adapter of a BCR (BTB-CUL3-RBX1) E3 ubiquitin ligase complex. Required for skeletal muscle development. The chain is Kelch-like protein 40b (klhl40b) from Danio rerio (Zebrafish).